The primary structure comprises 258 residues: 5'-nucleotidase SurE (258 aa).

Residues Asp-18, Asp-19, Ser-49, and Asn-102 each coordinate a divalent metal cation.

Belongs to the SurE nucleotidase family. A divalent metal cation is required as a cofactor.

It is found in the cytoplasm. It carries out the reaction a ribonucleoside 5'-phosphate + H2O = a ribonucleoside + phosphate. Its function is as follows. Nucleotidase that shows phosphatase activity on nucleoside 5'-monophosphates. This Vibrio parahaemolyticus serotype O3:K6 (strain RIMD 2210633) protein is 5'-nucleotidase SurE.